Here is a 460-residue protein sequence, read N- to C-terminus: MAMLWLAVLLTCGAPAALLPTSGVGCPSRCDPASCAPAPTNCPAGETALRCGCCPVCAAAEWERCGEGPEDPLCASGLRCVKNGGVARCQCPSNLPVCGSDGKTYPSLCRLQAESKAAQGKGSAAIIPIQRGDCQQGQRDPDSPRYKYNFIADVVEKIAPAVVHIELFRMLPFFKREVPAASGSGFIVSEDGLILTNAHVVTNKHRLKVERSDGSTYDAQIIDVDEKADIALIKIKAKGKLPVLLLGRSEDLRPGEFVVAIGSPFSLQNTVTTGIVSTAQRGGKELGLRNSDMDYIQTDAIINYGNSGGPLVNLDGEVIGINTLKVTAGISFAIPSDKIRKFLAESHNRQSTGQGTKKKKYLGIRMMSLSQGKLKELKEQVKDFPENTSGAYIVEVIPDTPAEEAGLKEGDIIISIGGKSVTSSSDVSDAIKKEGTTLHLVIRRGNEDIPISVTPKEIEF.

A signal peptide spans 1–18; it reads MAMLWLAVLLTCGAPAAL. Positions 22–92 constitute an IGFBP N-terminal domain; it reads SGVGCPSRCD…NGGVARCQCP (71 aa). Intrachain disulfides connect C26–C51, C30–C53, C35–C54, C42–C57, C65–C80, C74–C89, C91–C109, and C98–C134. A Kazal-like domain is found at 74-136; the sequence is CASGLRCVKN…IPIQRGDCQQ (63 aa). Residues 183-343 are serine protease; sequence GSGFIVSEDG…IPSDKIRKFL (161 aa). Active-site charge relay system residues include H199, D229, and S307. Positions 344-447 constitute a PDZ domain; it reads AESHNRQSTG…LHLVIRRGNE (104 aa).

The protein belongs to the peptidase S1C family. As to quaternary structure, forms homotrimers. In the presence of substrate, may form higher-order multimers in a PDZ-independent manner.

It localises to the cell membrane. The protein localises to the secreted. It is found in the cytoplasm. Its subcellular location is the cytosol. Serine protease with a variety of targets, including extracellular matrix proteins and proteoglycans such as biglycan, syndecan-4 and glypican-4. Through cleavage of proteoglycans, may release soluble FGF-glycosaminoglycan complexes that promote the range and intensity of FGF signals in the extracellular space. Consequently, facilitates inductive processes in the developing embryo, such as posteriorization, mesoderm induction and neuronal differentiation. Regulates the availability of insulin-like growth factors (IGFs) by cleaving IGF-binding proteins. Inhibits signaling mediated by TGF-beta family members. Consequently, may regulate many physiological processes. Intracellularly, degrades TSC2, leading to the activation of TSC2 downstream targets. The polypeptide is Serine protease HTRA1 (htra1) (Xenopus tropicalis (Western clawed frog)).